Reading from the N-terminus, the 502-residue chain is Inosine-5'-monophosphate dehydrogenase 2 (502 aa).

Position 2 is an N-acetylserine (S2). Residues 166-225 (MKSCENKDYYVPWDIDLDKIEAVLEDKQKGFVVLEKEGETVNVVTKDDVERVKGYPKLGS) enclose the CBS domain. NAD(+) contacts are provided by residues 264-266 (DSS) and 314-316 (GMG). K(+)-binding residues include G316 and G318. S319 serves as a coordination point for IMP. K(+) is bound at residue C321. C321 acts as the Thioimidate intermediate in catalysis. IMP is bound by residues 354 to 356 (DGG), 377 to 378 (GS), and 401 to 405 (YRGMG). The active-site Proton acceptor is R417. Q429 is an IMP binding site. E488, G489, and G490 together coordinate K(+).

This sequence belongs to the IMPDH/GMPR family. Homotetramer. K(+) is required as a cofactor.

It is found in the cytoplasm. The catalysed reaction is IMP + NAD(+) + H2O = XMP + NADH + H(+). Its pathway is purine metabolism; XMP biosynthesis via de novo pathway; XMP from IMP: step 1/1. Its activity is regulated as follows. Mycophenolic acid (MPA) is a non-competitive inhibitor that prevents formation of the closed enzyme conformation by binding to the same site as the amobile flap. In contrast, mizoribine monophosphate (MZP) is a competitive inhibitor that induces the closed conformation. MPA is a potent inhibitor of mammalian IMPDHs but a poor inhibitor of the bacterial enzymes. MZP is a more potent inhibitor of bacterial IMPDH. Its function is as follows. Catalyzes the conversion of inosine 5'-phosphate (IMP) to xanthosine 5'-phosphate (XMP), the first committed and rate-limiting step in the de novo synthesis of guanine nucleotides, and therefore plays an important role in the regulation of cell growth. This chain is Inosine-5'-monophosphate dehydrogenase 2, found in Arabidopsis thaliana (Mouse-ear cress).